The following is a 275-amino-acid chain: Esterase AAEL000016 (275 aa).

The segment at 1 to 21 (MMANETAAKSTKSSPTPAVEP) is disordered. Residues 7–16 (AAKSTKSSPT) show a composition bias toward polar residues. Active-site charge relay system residues include serine 129, aspartate 187, and histidine 214. A disordered region spans residues 253–275 (LVDDSGPAGNGVHDDDDDDDDSD). Positions 266-275 (DDDDDDDDSD) are enriched in acidic residues.

Belongs to the LovG family.

This Aedes aegypti (Yellowfever mosquito) protein is Esterase AAEL000016.